The chain runs to 131 residues: Glycine cleavage system H protein (131 aa).

The 83-residue stretch at 24–106 (RAIVGVSDHA…YGEGWIMVIE (83 aa)) folds into the Lipoyl-binding domain. Lysine 65 carries the post-translational modification N6-lipoyllysine.

This sequence belongs to the GcvH family. The glycine cleavage system is composed of four proteins: P, T, L and H. (R)-lipoate is required as a cofactor.

Its function is as follows. The glycine cleavage system catalyzes the degradation of glycine. The H protein shuttles the methylamine group of glycine from the P protein to the T protein. In Xylella fastidiosa (strain Temecula1 / ATCC 700964), this protein is Glycine cleavage system H protein.